The sequence spans 465 residues: Argininosuccinate lyase (465 aa).

This sequence belongs to the lyase 1 family. Argininosuccinate lyase subfamily.

The protein resides in the cytoplasm. The enzyme catalyses 2-(N(omega)-L-arginino)succinate = fumarate + L-arginine. It participates in amino-acid biosynthesis; L-arginine biosynthesis; L-arginine from L-ornithine and carbamoyl phosphate: step 3/3. The chain is Argininosuccinate lyase from Desulfatibacillum aliphaticivorans.